A 200-amino-acid polypeptide reads, in one-letter code: Urease accessory protein UreG (200 aa).

Glycine 11 to threonine 18 contributes to the GTP binding site.

Belongs to the SIMIBI class G3E GTPase family. UreG subfamily. Homodimer. UreD, UreF and UreG form a complex that acts as a GTP-hydrolysis-dependent molecular chaperone, activating the urease apoprotein by helping to assemble the nickel containing metallocenter of UreC. The UreE protein probably delivers the nickel.

The protein resides in the cytoplasm. Its function is as follows. Facilitates the functional incorporation of the urease nickel metallocenter. This process requires GTP hydrolysis, probably effectuated by UreG. This is Urease accessory protein UreG from Thermosynechococcus vestitus (strain NIES-2133 / IAM M-273 / BP-1).